The following is a 551-amino-acid chain: Calcium-dependent protein kinase 3 (551 aa).

Residues 1-57 (MGNCCRSPAAAAREDVKSSHFPASAGKKKPHQARNGGVGGGGGGGGGGGGGGGAGQK) are disordered. A lipid anchor (N-myristoyl glycine) is attached at Gly2. Residues 36-55 (GGVGGGGGGGGGGGGGGGAG) show a composition bias toward gly residues. The 259-residue stretch at 77 to 335 (YALDRELGRG…AKQVLEHPWL (259 aa)) folds into the Protein kinase domain. ATP-binding positions include 83 to 91 (LGRGEFGVT) and Lys106. Asp201 serves as the catalytic Proton acceptor. The autoinhibitory domain stretch occupies residues 341-371 (APNVPLGDIVKSRLKQFSRMNRFKRRALRVI). 4 EF-hand domains span residues 378–413 (EEVE…FGSH), 414–449 (LAES…LQRM), 450–485 (ANDE…DGAG), and 486–521 (DSME…GTDW). Residues Asp391, Asp393, Asp395, Glu402, Asp427, Asn429, Glu438, Asp463, Asp465, Asn467, Tyr469, Glu474, Asp499, Asp501, Asp503, Lys505, and Glu510 each contribute to the Ca(2+) site.

Belongs to the protein kinase superfamily. Ser/Thr protein kinase family. CDPK subfamily. Expressed in roots and developing seeds.

It is found in the membrane. It carries out the reaction L-seryl-[protein] + ATP = O-phospho-L-seryl-[protein] + ADP + H(+). It catalyses the reaction L-threonyl-[protein] + ATP = O-phospho-L-threonyl-[protein] + ADP + H(+). With respect to regulation, activated by calcium. Autophosphorylation may play an important role in the regulation of the kinase activity. In terms of biological role, may play a role in signal transduction pathways that involve calcium as a second messenger. This is Calcium-dependent protein kinase 3 from Oryza sativa subsp. japonica (Rice).